A 187-amino-acid chain; its full sequence is UPF0301 protein WIGBR1650 (187 aa).

The protein belongs to the UPF0301 (AlgH) family.

The chain is UPF0301 protein WIGBR1650 from Wigglesworthia glossinidia brevipalpis.